The following is a 275-amino-acid chain: N-(5'-phosphoribosyl)anthranilate isomerase 1, chloroplastic (275 aa).

The N-terminal 32 residues, 1-32 (MSTGISTDLHVHFGALNFSKTYKSGLSNRTVS), are a transit peptide targeting the chloroplast.

It belongs to the TrpF family. Expressed in roots and shoots.

Its subcellular location is the plastid. It is found in the chloroplast. The catalysed reaction is N-(5-phospho-beta-D-ribosyl)anthranilate = 1-(2-carboxyphenylamino)-1-deoxy-D-ribulose 5-phosphate. Its pathway is amino-acid biosynthesis; L-tryptophan biosynthesis; L-tryptophan from chorismate: step 3/5. In terms of biological role, catalyzes the conversion of 5-phosphoribosylanthranilate to l-(O-carboxyphenylamino)-l-deoxyribulose-5-phosphate, which is the third step of the tryptophan biosynthetic pathway. In Arabidopsis thaliana (Mouse-ear cress), this protein is N-(5'-phosphoribosyl)anthranilate isomerase 1, chloroplastic (PAI1).